The primary structure comprises 1241 residues: Putative ABC transporter B family member 8 (1241 aa).

Residues 24–44 (FADWIDIVLMVLGSVGAIGDG) traverse the membrane as a helical segment. The ABC transmembrane type-1 1 domain maps to 33–323 (MVLGSVGAIG…ALTEIRYFSE (291 aa)). An N-linked (GlcNAc...) asparagine glycan is attached at Asn48. A run of 5 helical transmembrane segments spans residues 82–102 (LYFVYLGLAILGVAFMEGYCW), 157–177 (VPIFLMHISVFITGLVFSAYF), 183–203 (VVAIPTLVLLLIPGLIYGKYL), 263–283 (GLAVGSSGISFTIWAFLAWYG), and 297–317 (IYAAGISFVLGGISLGTALTE). The ABC transporter 1 domain maps to 360-596 (VEFERVTLVY…NNHYAKLVKL (237 aa)). An ATP-binding site is contributed by 395-402 (GASGSGKS). Asn571, Asn632, and Asn648 each carry an N-linked (GlcNAc...) asparagine glycan. The ABC transmembrane type-1 2 domain maps to 676-964 (SLVGCISATT…AGSMTSDLAK (289 aa)). 2 consecutive transmembrane segments (helical) span residues 686–706 (FGAIQPVYALSIGGMISAFFA) and 716–736 (IHIYSLIFISLTFLSITLNLL). The N-linked (GlcNAc...) asparagine glycan is linked to Asn773. 2 consecutive transmembrane segments (helical) span residues 797–815 (ISLLVQTISGVTIAMIIGL) and 821–838 (LALVMIAVQPLSILCFYT). The N-linked (GlcNAc...) asparagine glycan is linked to Asn855. The next 2 helical transmembrane spans lie at 899-919 (AWLAGFGMGSAQCLTFLTWAL) and 933-953 (ISAGDVFKTFFVLVSTGKVIA). Residues 998 to 1236 (IELKNIDFSY…GGQFSRLAHA (239 aa)) form the ABC transporter 2 domain. Residue 1033 to 1040 (GTSGCGKS) coordinates ATP. A glycan (N-linked (GlcNAc...) asparagine) is linked at Asn1187.

Belongs to the ABC transporter superfamily. ABCB family. Multidrug resistance exporter (TC 3.A.1.201) subfamily.

It is found in the membrane. The chain is Putative ABC transporter B family member 8 (ABCB8) from Arabidopsis thaliana (Mouse-ear cress).